Reading from the N-terminus, the 80-residue chain is Pigment-dispersing hormone type 2 (80 aa).

The N-terminal stretch at 1–23 (MARCFVVLAFLALAAMSLQVATA) is a signal peptide. Ala77 carries the alanine amide modification.

Belongs to the arthropod PDH family. In terms of tissue distribution, eyestalk.

The protein localises to the secreted. Its function is as follows. The pigment-dispersing hormone causes the migration of the distal retinal pigment into the proximal end of the pigment chromatophore cells and thus decreases the amount of light entering the retinulas. May also function as a neurotransmitter and/or neuromodulator. This is Pigment-dispersing hormone type 2 (PDH2) from Penaeus vannamei (Whiteleg shrimp).